Consider the following 264-residue polypeptide: uncharacterized protein (264 aa).

Positions 1-21 (MMWNYFVTCIVLYANIISIHT) are cleaved as a signal peptide. A disordered region spans residues 182–247 (QQPNAAQVPT…AANNGLDLTS (66 aa)). Positions 190 to 213 (PTTSQQQPTSNTGGQQPPTNASNP) are enriched in low complexity. Asparagine 209 carries an N-linked (GlcNAc...) asparagine glycan. Residues 214–226 (PTNPQPTPTPAQP) are compositionally biased toward pro residues. Residues 230–247 (GTQVQQTPAANNGLDLTS) are compositionally biased toward polar residues.

In terms of tissue distribution, component of the acid-insoluble and acid-soluble organic matrix of calcified layers of the shell (at protein level).

It localises to the secreted. This is an uncharacterized protein from Lottia gigantea (Giant owl limpet).